The following is a 189-amino-acid chain: MGLLDAAVSRQNVLVTSVDSVLNWARLSSLWPMGFGLACCAIEMMATNASNYDLERFGIFPRSSPRQSDLMIVAGTVTMKMAERVVRLYEQMPEPRYVLSMGSCSNCGGPYWEHGYHVLKGVDRVIPVDVYVPGCPPRPEALIGGLMKIQELIRMEGLGVSRADALKKLAEAESDPQPLIEEARKQKTA.

4 residues coordinate [4Fe-4S] cluster: C39, C40, C104, and C135.

It belongs to the complex I 20 kDa subunit family. In terms of assembly, NDH-1 is composed of 14 different subunits. Subunits NuoB, C, D, E, F, and G constitute the peripheral sector of the complex. It depends on [4Fe-4S] cluster as a cofactor.

Its subcellular location is the cell inner membrane. The enzyme catalyses a quinone + NADH + 5 H(+)(in) = a quinol + NAD(+) + 4 H(+)(out). Its function is as follows. NDH-1 shuttles electrons from NADH, via FMN and iron-sulfur (Fe-S) centers, to quinones in the respiratory chain. The immediate electron acceptor for the enzyme in this species is believed to be a menaquinone. Couples the redox reaction to proton translocation (for every two electrons transferred, four hydrogen ions are translocated across the cytoplasmic membrane), and thus conserves the redox energy in a proton gradient. This Chlorobium phaeovibrioides (strain DSM 265 / 1930) (Prosthecochloris vibrioformis (strain DSM 265)) protein is NADH-quinone oxidoreductase subunit B.